A 417-amino-acid polypeptide reads, in one-letter code: Gamma-glutamyl phosphate reductase (417 aa).

This sequence belongs to the gamma-glutamyl phosphate reductase family.

Its subcellular location is the cytoplasm. It catalyses the reaction L-glutamate 5-semialdehyde + phosphate + NADP(+) = L-glutamyl 5-phosphate + NADPH + H(+). It functions in the pathway amino-acid biosynthesis; L-proline biosynthesis; L-glutamate 5-semialdehyde from L-glutamate: step 2/2. Its function is as follows. Catalyzes the NADPH-dependent reduction of L-glutamate 5-phosphate into L-glutamate 5-semialdehyde and phosphate. The product spontaneously undergoes cyclization to form 1-pyrroline-5-carboxylate. The polypeptide is Gamma-glutamyl phosphate reductase (Desulfitobacterium hafniense (strain DSM 10664 / DCB-2)).